Reading from the N-terminus, the 301-residue chain is NADH-ubiquinone oxidoreductase chain 1 (301 aa).

The next 8 helical transmembrane spans lie at 4 to 24, 62 to 82, 96 to 116, 140 to 160, 165 to 185, 216 to 236, 247 to 267, and 279 to 299; these read IIPI…VLGY, LALF…MWIP, ILFM…SGWA, LAII…STLI, YTWL…STIA, LFFL…IILF, EMYT…FLWI, and LMHL…MWHV.

This sequence belongs to the complex I subunit 1 family.

The protein resides in the mitochondrion inner membrane. The enzyme catalyses a ubiquinone + NADH + 5 H(+)(in) = a ubiquinol + NAD(+) + 4 H(+)(out). Functionally, core subunit of the mitochondrial membrane respiratory chain NADH dehydrogenase (Complex I) that is believed to belong to the minimal assembly required for catalysis. Complex I functions in the transfer of electrons from NADH to the respiratory chain. The immediate electron acceptor for the enzyme is believed to be ubiquinone. This Nyctalus noctula (Noctule bat) protein is NADH-ubiquinone oxidoreductase chain 1 (MT-ND1).